The following is a 505-amino-acid chain: MFS-type transporter oryN (505 aa).

The tract at residues 1 to 54 (MAVAELPNIVSTDSSPSPHPGSRLSSEPTDIESQKAPSNAEPKTDPNLVTWDGP) is disordered. 13 consecutive transmembrane segments (helical) span residues 69–89 (AFVT…SSIF), 106–126 (VVTL…PVWG), 135–155 (KWPM…VAVA), 166–186 (FLTG…LVDM), 193–213 (GVAM…APLM), 226–246 (FTQW…VFGL), 280–300 (GIKD…VTEP), 301–321 (ILLL…LVFV), 337–357 (ISAL…AIVV), 376–396 (LPLM…FAWT), 401–421 (IHWA…YMVF), 440–460 (IGAN…FGPF), and 468–488 (AWAS…PVLF).

The protein belongs to the major facilitator superfamily. CAR1 family.

Its subcellular location is the membrane. Its function is as follows. MFS-type transporter; part of the gene cluster that mediates the biosynthesis of oryzines, natural products with an unusual maleidride backbone. In Aspergillus oryzae (strain ATCC 42149 / RIB 40) (Yellow koji mold), this protein is MFS-type transporter oryN.